A 137-amino-acid chain; its full sequence is Putative mucosal pentraxin homolog (137 aa).

The 137-residue stretch at 1–137 (MGMYLLHIGN…YVVTKPKVWA (137 aa)) folds into the Pentraxin (PTX) domain. Ca(2+) contacts are provided by Glu73, Asp75, and Gln85.

Belongs to the pentraxin family. In terms of tissue distribution, not expressed in the intestinal tract including ascending colon, descending colon and rectum. Not expressed in the human colon cancer cell lines HT-29 and CaCo-2.

The sequence is that of Putative mucosal pentraxin homolog (MPTX1) from Homo sapiens (Human).